Consider the following 254-residue polypeptide: HLA class II histocompatibility antigen, DQ alpha 1 chain (254 aa).

The first 23 residues, 1–23 (MILNKALMLGALALTTVMSPCGG), serve as a signal peptide directing secretion. The tract at residues 24 to 119 (EDIVADHVAS…EVPEVTVFSK (96 aa)) is alpha-1. Topologically, residues 24 to 216 (EDIVADHVAS…IPAPMSELTE (193 aa)) are extracellular. Residues Asn103 and Asn143 are each glycosylated (N-linked (GlcNAc...) asparagine). Positions 112 to 204 (PEVTVFSKSP…LDKPLLKHWE (93 aa)) constitute an Ig-like C1-type domain. Positions 120 to 203 (SPVTLGQPNI…GLDKPLLKHW (84 aa)) are alpha-2. Residues Cys132 and Cys188 are joined by a disulfide bond. The segment at 204-216 (EPEIPAPMSELTE) is connecting peptide. The helical transmembrane segment at 217-239 (TVVCALGLSVGLVGIVVGTVFII) threads the bilayer. Residues 240–254 (RGLRSVGASRHQGPL) lie on the Cytoplasmic side of the membrane.

It belongs to the MHC class II family. Heterodimer of an alpha and a beta subunit; also referred as MHC class II molecule. In the endoplasmic reticulum (ER) it forms a heterononamer; 3 MHC class II molecules bind to a CD74 homotrimer (also known as invariant chain or HLA class II histocompatibility antigen gamma chain). In the endosomal/lysosomal system; CD74 undergoes sequential degradation by various proteases; leaving a small fragment termed CLIP on each MHC class II molecule. MHC class II molecule interacts with HLA_DM, and HLA_DO in B-cells, in order to release CLIP and facilitate the binding of antigenic peptides.

Its subcellular location is the cell membrane. It is found in the endoplasmic reticulum membrane. The protein localises to the golgi apparatus. It localises to the trans-Golgi network membrane. The protein resides in the endosome membrane. Its subcellular location is the lysosome membrane. Binds peptides derived from antigens that access the endocytic route of antigen presenting cells (APC) and presents them on the cell surface for recognition by the CD4 T-cells. The peptide binding cleft accommodates peptides of 10-30 residues. The peptides presented by MHC class II molecules are generated mostly by degradation of proteins that access the endocytic route, where they are processed by lysosomal proteases and other hydrolases. Exogenous antigens that have been endocytosed by the APC are thus readily available for presentation via MHC II molecules, and for this reason this antigen presentation pathway is usually referred to as exogenous. As membrane proteins on their way to degradation in lysosomes as part of their normal turn-over are also contained in the endosomal/lysosomal compartments, exogenous antigens must compete with those derived from endogenous components. Autophagy is also a source of endogenous peptides, autophagosomes constitutively fuse with MHC class II loading compartments. In addition to APCs, other cells of the gastrointestinal tract, such as epithelial cells, express MHC class II molecules and CD74 and act as APCs, which is an unusual trait of the GI tract. To produce a MHC class II molecule that presents an antigen, three MHC class II molecules (heterodimers of an alpha and a beta chain) associate with a CD74 trimer in the ER to form a heterononamer. Soon after the entry of this complex into the endosomal/lysosomal system where antigen processing occurs, CD74 undergoes a sequential degradation by various proteases, including CTSS and CTSL, leaving a small fragment termed CLIP (class-II-associated invariant chain peptide). The removal of CLIP is facilitated by HLA-DM via direct binding to the alpha-beta-CLIP complex so that CLIP is released. HLA-DM stabilizes MHC class II molecules until primary high affinity antigenic peptides are bound. The MHC II molecule bound to a peptide is then transported to the cell membrane surface. In B-cells, the interaction between HLA-DM and MHC class II molecules is regulated by HLA-DO. Primary dendritic cells (DCs) also to express HLA-DO. Lysosomal microenvironment has been implicated in the regulation of antigen loading into MHC II molecules, increased acidification produces increased proteolysis and efficient peptide loading. The sequence is that of HLA class II histocompatibility antigen, DQ alpha 1 chain (HLA-DQA1) from Homo sapiens (Human).